An 877-amino-acid polypeptide reads, in one-letter code: Translation initiation factor IF-2 (877 aa).

A compositionally biased stretch (basic and acidic residues) spans 66–115 (PKKESTAKKTTKKDEVKKEEKKTTTKKESKNPAKAVSEKKDEVKKEEKQP). 3 disordered regions span residues 66–127 (PKKE…LEEK), 187–208 (SDESLKRKKKEKKNHPVASKKE), and 241–290 (ENKP…KESE). The segment covering 192-201 (KRKKKEKKNH) has biased composition (basic residues). Over residues 245 to 265 (AQPTNKKQPNILKQSLNNSIN) the composition is skewed to polar residues. Residues 376–543 (QRAPVITIMG…IVLLQADILE (168 aa)) form the tr-type G domain. Residues 385–392 (GHVDHGKT) form a G1 region. 385-392 (GHVDHGKT) is a binding site for GTP. The segment at 410-414 (GITQH) is G2. The segment at 431–434 (DTPG) is G3. GTP contacts are provided by residues 431–435 (DTPGH) and 485–488 (NKMD). The interval 485–488 (NKMD) is G4. Positions 521–523 (SAK) are G5.

Belongs to the TRAFAC class translation factor GTPase superfamily. Classic translation factor GTPase family. IF-2 subfamily.

It localises to the cytoplasm. Functionally, one of the essential components for the initiation of protein synthesis. Protects formylmethionyl-tRNA from spontaneous hydrolysis and promotes its binding to the 30S ribosomal subunits. Also involved in the hydrolysis of GTP during the formation of the 70S ribosomal complex. The protein is Translation initiation factor IF-2 of Campylobacter lari (strain RM2100 / D67 / ATCC BAA-1060).